A 446-amino-acid polypeptide reads, in one-letter code: ATP-dependent protease ATPase subunit HslU (446 aa).

ATP is bound by residues Val-18, 60–65 (GVGKTE), Asp-259, Glu-324, and Arg-396.

Belongs to the ClpX chaperone family. HslU subfamily. In terms of assembly, a double ring-shaped homohexamer of HslV is capped on each side by a ring-shaped HslU homohexamer. The assembly of the HslU/HslV complex is dependent on binding of ATP.

The protein resides in the cytoplasm. Its function is as follows. ATPase subunit of a proteasome-like degradation complex; this subunit has chaperone activity. The binding of ATP and its subsequent hydrolysis by HslU are essential for unfolding of protein substrates subsequently hydrolyzed by HslV. HslU recognizes the N-terminal part of its protein substrates and unfolds these before they are guided to HslV for hydrolysis. The chain is ATP-dependent protease ATPase subunit HslU from Dechloromonas aromatica (strain RCB).